We begin with the raw amino-acid sequence, 101 residues long: Small ribosomal subunit protein uS14 (101 aa).

This sequence belongs to the universal ribosomal protein uS14 family. As to quaternary structure, part of the 30S ribosomal subunit. Contacts proteins S3 and S10.

Functionally, binds 16S rRNA, required for the assembly of 30S particles and may also be responsible for determining the conformation of the 16S rRNA at the A site. In Aeromonas salmonicida (strain A449), this protein is Small ribosomal subunit protein uS14.